The primary structure comprises 254 residues: Ornithine decarboxylase antizyme (254 aa).

It belongs to the ODC antizyme family. Interacts with ODC1 and thereby sterically blocks ODC homodimerization.

In terms of biological role, ornithine decarboxylase (ODC) antizyme protein that negatively regulates ODC activity and intracellular polyamine biosynthesis and uptake in response to increased intracellular polyamine levels. Binds to ODC monomers, inhibiting the assembly of the functional ODC homodimer, and targets the monomers for ubiquitin-independent proteolytic destruction by the 26S proteasome. Required for cellular differentiation in neuronal and myogenic lineages during embryonic development. The protein is Ornithine decarboxylase antizyme (Oda) of Drosophila melanogaster (Fruit fly).